The primary structure comprises 121 residues: Aspartate 1-decarboxylase (121 aa).

Catalysis depends on serine 25, which acts as the Schiff-base intermediate with substrate; via pyruvic acid. Serine 25 is modified (pyruvic acid (Ser)). Threonine 57 lines the substrate pocket. Residue tyrosine 58 is the Proton donor of the active site. 73–75 (GAA) lines the substrate pocket.

Belongs to the PanD family. As to quaternary structure, heterooctamer of four alpha and four beta subunits. It depends on pyruvate as a cofactor. Is synthesized initially as an inactive proenzyme, which is activated by self-cleavage at a specific serine bond to produce a beta-subunit with a hydroxyl group at its C-terminus and an alpha-subunit with a pyruvoyl group at its N-terminus.

The protein resides in the cytoplasm. The catalysed reaction is L-aspartate + H(+) = beta-alanine + CO2. It participates in cofactor biosynthesis; (R)-pantothenate biosynthesis; beta-alanine from L-aspartate: step 1/1. Functionally, catalyzes the pyruvoyl-dependent decarboxylation of aspartate to produce beta-alanine. This is Aspartate 1-decarboxylase from Sulfurimonas denitrificans (strain ATCC 33889 / DSM 1251) (Thiomicrospira denitrificans (strain ATCC 33889 / DSM 1251)).